Here is a 273-residue protein sequence, read N- to C-terminus: Galactose-binding lectin (273 aa).

Positions 1-23 are cleaved as a signal peptide; sequence MKPFCVFLTFFLLLAASSKKVDS. Glu-144 and Asp-146 together coordinate Mn(2+). Residues Asp-146, Tyr-148, Asn-150, and Asp-155 each coordinate Ca(2+). Asp-155 and His-160 together coordinate Mn(2+).

It belongs to the leguminous lectin family. Homotetramer.

Its function is as follows. D-galactose specific lectin. The protein is Galactose-binding lectin of Arachis hypogaea (Peanut).